Here is a 284-residue protein sequence, read N- to C-terminus: Bifunctional protein FolD (284 aa).

Residues Gly166–Ser168 and Ile232 each bind NADP(+).

The protein belongs to the tetrahydrofolate dehydrogenase/cyclohydrolase family. In terms of assembly, homodimer.

The enzyme catalyses (6R)-5,10-methylene-5,6,7,8-tetrahydrofolate + NADP(+) = (6R)-5,10-methenyltetrahydrofolate + NADPH. It catalyses the reaction (6R)-5,10-methenyltetrahydrofolate + H2O = (6R)-10-formyltetrahydrofolate + H(+). It functions in the pathway one-carbon metabolism; tetrahydrofolate interconversion. Its function is as follows. Catalyzes the oxidation of 5,10-methylenetetrahydrofolate to 5,10-methenyltetrahydrofolate and then the hydrolysis of 5,10-methenyltetrahydrofolate to 10-formyltetrahydrofolate. The polypeptide is Bifunctional protein FolD (Shewanella sp. (strain ANA-3)).